A 431-amino-acid chain; its full sequence is O-methyltransferase gliM (431 aa).

A coiled-coil region spans residues 20 to 85 (EFKAIVNDLR…SMDKLQLQLV (66 aa)). Residues Asp287 and 319-321 (GDF) each bind S-adenosyl-L-methionine. His338 acts as the Proton acceptor in catalysis.

It belongs to the class I-like SAM-binding methyltransferase superfamily. Cation-independent O-methyltransferase family. COMT subfamily.

The protein operates within mycotoxin biosynthesis. Its function is as follows. O-methyltransferase; part of the gene cluster that mediates the biosynthesis of gliotoxin, a member of the epipolythiodioxopiperazine (ETP) class of toxins characterized by a disulfide bridged cyclic dipeptide. The first step in gliotoxin biosynthesis is the condensation of serine and phenylalanine to form the cyclo-L-phenylalanyl-L-serine diketopiperazine (DKP) by the NRPS gliP. GliP is also able to produce the DKP cyclo-L-tryptophanyl-L-serine, suggesting that the substrate specificity of the first adenylation (A) domain in gliP is sufficiently relaxed to accommodate both L-Phe and L-Trp. The cytochrome P450 monooxygenase gliC has been shown to catalyze the subsequent hydroxylation of the alpha-carbon of L-Phe in cyclo-L-phenylalanyl-L-serine whereas the second cytochrome P450 enzyme, gliF, is presumably involved in the modification of the DKP side chain. The glutathione S-transferase (GST) gliG then forms a bis-glutathionylated biosynthetic intermediate which is responsible for the sulfurization of gliotoxin. This bis-glutathionylated intermediate is subsequently processed by the gamma-glutamyl cyclotransferase gliK to remove both gamma-glutamyl moieties. Subsequent processing via gliI yields a biosynthetic intermediate, which is N-methylated via the N-methyltransferase gliN, before the gliotoxin oxidoreductase gliT-mediated disulfide bridge closure. GliN-mediated amide methylation confers stability to ETP, damping the spontaneous formation of tri- and tetrasulfides. Intracellular dithiol gliotoxin oxidized by gliT is subsequently effluxed by gliA. Gliotoxin contributes to pathogenesis during invasive aspergillosis. In macrophages and neutrophils, gliotoxin showed inhibition of various different cell functions including cytokine production, antigen presentation, phagocytosis, and production of reactive oxygen species. The sequence is that of O-methyltransferase gliM from Aspergillus fumigatus (strain ATCC MYA-4609 / CBS 101355 / FGSC A1100 / Af293) (Neosartorya fumigata).